The primary structure comprises 41 residues: QQCGRQASGRLCGNRLCCSQWGYCGSTASYCGAGCQSQCRS.

Residue glutamine 1 is modified to Pyrrolidone carboxylic acid. The Chitin-binding type-1 domain maps to 1 to 41; that stretch reads QQCGRQASGRLCGNRLCCSQWGYCGSTASYCGAGCQSQCRS. 4 disulfides stabilise this stretch: cysteine 3–cysteine 18, cysteine 12–cysteine 24, cysteine 17–cysteine 31, and cysteine 35–cysteine 39.

Its function is as follows. Chitin-binding protein with a defensive function against numerous chitin containing fungal pathogens. It is also an inhibitor of Gram-positive bacteria such as B.subtilis. The protein is Antimicrobial protein PN-AMP1 of Ipomoea nil (Japanese morning glory).